Here is a 217-residue protein sequence, read N- to C-terminus: Large ribosomal subunit protein uL1 (217 aa).

Belongs to the universal ribosomal protein uL1 family. As to quaternary structure, part of the 50S ribosomal subunit.

Binds directly to 23S rRNA. Probably involved in E site tRNA release. Its function is as follows. Protein L1 is also a translational repressor protein, it controls the translation of its operon by binding to its mRNA. The sequence is that of Large ribosomal subunit protein uL1 from Thermoplasma volcanium (strain ATCC 51530 / DSM 4299 / JCM 9571 / NBRC 15438 / GSS1).